The chain runs to 628 residues: DNA ligase (628 aa).

NAD(+) is bound by residues 36–40 (DVEYD), 85–86 (SL), and Glu117. Residue Lys119 is the N6-AMP-lysine intermediate of the active site. Arg140, Glu174, Lys309, and Lys333 together coordinate NAD(+). 4 residues coordinate Zn(2+): Cys427, Cys430, Cys446, and Cys452.

It belongs to the NAD-dependent DNA ligase family. LigA subfamily. Mg(2+) serves as cofactor. Mn(2+) is required as a cofactor.

It carries out the reaction NAD(+) + (deoxyribonucleotide)n-3'-hydroxyl + 5'-phospho-(deoxyribonucleotide)m = (deoxyribonucleotide)n+m + AMP + beta-nicotinamide D-nucleotide.. Functionally, DNA ligase that catalyzes the formation of phosphodiester linkages between 5'-phosphoryl and 3'-hydroxyl groups in double-stranded DNA using NAD as a coenzyme and as the energy source for the reaction. It is essential for DNA replication and repair of damaged DNA. The sequence is that of DNA ligase from Tropheryma whipplei (strain Twist) (Whipple's bacillus).